A 150-amino-acid chain; its full sequence is Natriuretic peptides A (150 aa).

Residues 1 to 24 (MSSFTITVSFLLVLVFQFPGQTRA) form the signal peptide. 2 consecutive propeptides follow at residues 25–122 (NPVY…AAPR) and 92–102 (DGGALGRGPWD). The tract at residues 77–100 (LEVPPWTGEVNPAQRDGGALGRGP) is disordered. Ser128 is modified (phosphoserine). Cys129 and Cys145 are disulfide-bonded.

Belongs to the natriuretic peptide family. Homodimer; disulfide-linked antiparallel dimer. Post-translationally, the precursor molecule is proteolytically cleaved by CORIN at Arg-122 to produce the atrial natriuretic peptide. Undergoes further proteolytic cleavage by unknown proteases to give rise to long-acting natriuretic peptide, vessel dilator and kaliuretic peptide. Additional processing gives rise to the auriculin and atriopeptin peptides. In the kidneys, alternative processing by an unknown protease results in the peptide urodilatin. Cleavage by MME initiates degradation of the factor and thereby regulates its activity. Degradation by IDE results in reduced activation of NPR1 (in vitro). During IDE degradation, the resulting products can temporarily stimulate NPR2 to produce cGMP, before the fragments are completely degraded and inactivated by IDE (in vitro). In terms of processing, degraded by IDE. Post-translationally, phosphorylation on Ser-128 decreases vasorelaxant activity. In terms of tissue distribution, brain (at protein level).

The protein localises to the secreted. The protein resides in the perikaryon. Its subcellular location is the cell projection. In terms of biological role, hormone that plays a key role in mediating cardio-renal homeostasis, and is involved in vascular remodeling and regulating energy metabolism. Acts by specifically binding and stimulating NPR1 to produce cGMP, which in turn activates effector proteins, such as PRKG1, that drive various biological responses. Regulates vasodilation, natriuresis, diuresis and aldosterone synthesis and is therefore essential for regulating blood pressure, controlling the extracellular fluid volume and maintaining the fluid-electrolyte balance. Also involved in inhibiting cardiac remodeling and cardiac hypertrophy by inducing cardiomyocyte apoptosis and attenuating the growth of cardiomyocytes and fibroblasts. Plays a role in female pregnancy by promoting trophoblast invasion and spiral artery remodeling in uterus, and thus prevents pregnancy-induced hypertension. In adipose tissue, acts in various cGMP- and PKG-dependent pathways to regulate lipid metabolism and energy homeostasis. This includes up-regulating lipid metabolism and mitochondrial oxygen utilization by activating the AMP-activated protein kinase (AMPK), and increasing energy expenditure by acting via MAPK11 to promote the UCP1-dependent thermogenesis of brown adipose tissue. Binds the clearance receptor NPR3 which removes the hormone from circulation. Functionally, may have a role in cardio-renal homeostasis through regulation of natriuresis, diuresis, vasodilation, and inhibiting aldosterone synthesis. In vitro, promotes the production of cGMP and induces vasodilation. May promote natriuresis, at least in part, by enhancing prostaglandin E2 synthesis resulting in the inhibition of renal Na+-K+-ATPase. However reports on the involvement of this peptide in mammal blood volume and blood pressure homeostasis are conflicting; according to a report, in vivo it is not sufficient to activate cGMP and does not inhibit collecting duct transport nor effect diuresis and natriuresis. Appears to bind to specific receptors that are distinct from the receptors bound by atrial natriuretic peptide and vessel dilator. Possibly enhances protein excretion in urine by decreasing proximal tubular protein reabsorption. May have a role in cardio-renal homeostasis through regulation of natriuresis, diuresis, and vasodilation. In vitro, promotes the production of cGMP and induces vasodilation. May promote natriuresis, at least in part, by enhancing prostaglandin E2 synthesis resulting in the inhibition of renal Na+-K+-ATPase. However reports on the involvement of this peptide in mammal blood volume and blood pressure homeostasis are conflicting; according to a report it is not sufficient to activate cGMP and does not inhibit collecting duct transport nor effect diuresis and natriuresis. Appears to bind to specific receptors that are distinct from the receptors bound by the atrial natriuretic and long-acting natriuretic peptides. Possibly functions in protein excretion in urine by maintaining the integrity of the proximal tubules and enhancing protein excretion by decreasing proximal tubular protein reabsorption. Its function is as follows. May have a role in cardio-renal homeostasis through regulation of diuresis and inhibiting aldosterone synthesis. In vitro, promotes the production of cGMP and induces vasodilation. May promote natriuresis, at least in part, by enhancing prostaglandin E2 synthesis resulting in the inhibition of renal Na+-K+-ATPase. May have a role in potassium excretion but not sodium excretion (natriuresis). Possibly enhances protein excretion in urine by decreasing proximal tubular protein reabsorption. In terms of biological role, hormone produced in the kidneys that appears to be important for maintaining cardio-renal homeostasis. Mediates vasodilation, natriuresis and diuresis primarily in the renal system, in order to maintain the extracellular fluid volume and control the fluid-electrolyte balance. Specifically binds and stimulates cGMP production by renal transmembrane receptors, likely NPR1. Urodilatin not ANP, may be the natriuretic peptide responsible for the regulation of sodium and water homeostasis in the kidney. Functionally, may have a role in cardio-renal homeostasis through regulation of natriuresis and vasodilation. In vivo promotes natriuresis and in vitro, vasodilates renal artery strips. May have a role in cardio-renal homeostasis through regulation of regulation of natriuresis and vasodilation. In vivo promotes natriuresis. In vitro, vasodilates intestinal smooth muscle but not smooth muscle strips. Its function is as follows. May have a role in cardio-renal homeostasis through regulation of natriuresis and vasodilation. In vivo promotes natriuresis. In vitro, selectively vasodilates intestinal and vascular smooth muscle strips. In terms of biological role, may have a role in cardio-renal homeostasis through regulation of natriuresis and vasodilation. In vivo promotes natriuresis. In vitro, selectively vasodilates intestinal smooth muscle but not vascular smooth muscle strips. In Sus scrofa (Pig), this protein is Natriuretic peptides A (NPPA).